Here is a 346-residue protein sequence, read N- to C-terminus: UPF0053 protein sll1254 (346 aa).

The next 4 helical transmembrane spans lie at Met1 to Ala21, Ile58 to Ala78, Ala87 to Ile107, and Leu121 to Ile141. The CNNM transmembrane domain occupies Met1–Glu179. 2 consecutive CBS domains span residues Met198–Thr259 and Leu263–Glu320.

Belongs to the UPF0053 family.

The protein localises to the cell membrane. The protein is UPF0053 protein sll1254 of Synechocystis sp. (strain ATCC 27184 / PCC 6803 / Kazusa).